We begin with the raw amino-acid sequence, 1226 residues long: Polyamine-transporting ATPase 13A3 (1226 aa).

Residues 1–28 lie on the Cytoplasmic side of the membrane; the sequence is MDREERKTINQGQEDEMEIYGYNLSRWK. Residues 29 to 49 lie within the membrane without spanning it; it reads LAIVSLGVICSGGFLLLLLYW. Residues 50 to 205 lie on the Cytoplasmic side of the membrane; sequence MPEWRVKATC…IAVKVPSVFK (156 aa). At Ser98 the chain carries Phosphoserine. A helical transmembrane segment spans residues 206 to 226; the sequence is LLIKEVLNPFYIFQLFSVILW. The Lumenal portion of the chain corresponds to 227–232; that stretch reads STDEYY. Residues 233 to 253 form a helical membrane-spanning segment; it reads YYALAIVVMSIVSIVSSLYSI. The Cytoplasmic segment spans residues 254 to 409; the sequence is RKQYVMLHDM…KPTDFKLYRD (156 aa). The helical transmembrane segment at 410–430 threads the bilayer; sequence AYLFLLCLVAVAGIGFIYTII. The Lumenal segment spans residues 431-448; the sequence is NSILNEVQVGVIIIESLD. A helical transmembrane segment spans residues 449–469; sequence IITITVPPALPAAMTAGIVYA. Over 470-940 the chain is Cytoplasmic; that stretch reads QRRLKKIGIF…ALITSFCVFK (471 aa). The active-site 4-aspartylphosphate intermediate is Asp498. 2 residues coordinate Mg(2+): Asp498 and Thr500. ATP is bound by residues 498–500, Phe628, Arg684, and Asp750; that span reads DKT. Ser817 carries the phosphoserine modification. Positions 883 and 887 each coordinate Mg(2+). 883 to 887 lines the ATP pocket; it reads DGAND. A helical transmembrane segment spans residues 941-961; sequence FMALYSIIQYFSVTLLYSILS. A topological domain (lumenal) is located at residue Asn962. Residues 963 to 983 form a helical membrane-spanning segment; sequence LGDFQFLFIDLAIILVVVFTM. The Cytoplasmic segment spans residues 984-999; the sequence is SLNPAWKELVAQRPPS. The chain crosses the membrane as a helical span at residues 1000–1020; that stretch reads GLISGALLFSVLSQIIICIGF. Over 1021–1073 the chain is Lumenal; sequence QSLGFFWVKQQPWYEVWHPKSDACNTTGSGFWNSSHVDNETELDEHNIQNYEN. Residues 1074–1094 traverse the membrane as a helical segment; that stretch reads TTVFFISSFQYLIVAIAFSKG. Residues 1095 to 1105 are Cytoplasmic-facing; that stretch reads KPFRQPCYKNY. Residues 1106–1126 form a helical membrane-spanning segment; sequence FFVFSVIFLYIFILFIMLYPV. At 1127–1143 the chain is on the lumenal side; sequence ASVDQVLQIVCVPYQWR. A helical transmembrane segment spans residues 1144 to 1164; sequence VTMLIIVLVNAFVSITVEESV. Residues 1165-1226 lie on the Cytoplasmic side of the membrane; it reads DRWGKCCLPW…NGSCQIITIT (62 aa).

It belongs to the cation transport ATPase (P-type) (TC 3.A.3) family. Type V subfamily. In terms of tissue distribution, broadly expressed.

It localises to the recycling endosome membrane. The protein resides in the early endosome membrane. Its subcellular location is the late endosome membrane. The catalysed reaction is putrescine(out) + ATP + H2O = putrescine(in) + ADP + phosphate + H(+). ATP-driven pump involved in endocytosis-dependent polyamine transport. Uses ATP as an energy source to transfer polyamine precursor putrescine from the endosomal compartment to the cytosol. The protein is Polyamine-transporting ATPase 13A3 of Homo sapiens (Human).